The chain runs to 131 residues: Ribosome-binding factor A (131 aa).

Belongs to the RbfA family. As to quaternary structure, monomer. Binds 30S ribosomal subunits, but not 50S ribosomal subunits or 70S ribosomes.

It localises to the cytoplasm. Functionally, one of several proteins that assist in the late maturation steps of the functional core of the 30S ribosomal subunit. Associates with free 30S ribosomal subunits (but not with 30S subunits that are part of 70S ribosomes or polysomes). Required for efficient processing of 16S rRNA. May interact with the 5'-terminal helix region of 16S rRNA. This Vibrio vulnificus (strain CMCP6) protein is Ribosome-binding factor A.